A 427-amino-acid polypeptide reads, in one-letter code: 5-hydroxybenzimidazole synthase BzaB (427 aa).

This sequence belongs to the ThiC family. 5-hydroxybenzimidazole synthase subfamily. [4Fe-4S] cluster is required as a cofactor.

It catalyses the reaction 5-amino-1-(5-phospho-beta-D-ribosyl)imidazole + AH2 + S-adenosyl-L-methionine = 5-hydroxybenzimidazole + 5'-deoxyadenosine + formate + L-methionine + A + NH4(+) + phosphate + 2 H(+). Its pathway is cofactor biosynthesis; adenosylcobalamin biosynthesis. Its function is as follows. Together with BzaA, catalyzes the conversion of aminoimidazole ribotide (AIR) to 5-hydroxybenzimidazole (5-HBI) in a radical S-adenosyl-L-methionine (SAM)-dependent reaction. Is thus involved in the anaerobic biosynthesis of dimethylbenzimidazole (DMB), the lower axial ligand of vitamin B12 (cobalamin). Requires BzaA for catalytic activity, as BzaB alone displays no activity. This is 5-hydroxybenzimidazole synthase BzaB from Eubacterium limosum.